Reading from the N-terminus, the 346-residue chain is Small ribosomal subunit biogenesis GTPase RsgA (346 aa).

Positions 1-26 (MAKRKLTQNQTRRIQSNNAKTLHRHK) are disordered. Positions 7 to 20 (TQNQTRRIQSNNAK) are enriched in polar residues. Residues 103–271 (ENEISRPDYY…LIDSPGIREF (169 aa)) form the CP-type G domain. GTP-binding positions include 159–162 (NKVD) and 213–221 (GQSGVGKSS). Positions 295, 300, 302, and 308 each coordinate Zn(2+).

It belongs to the TRAFAC class YlqF/YawG GTPase family. RsgA subfamily. Monomer. Associates with 30S ribosomal subunit, binds 16S rRNA. Zn(2+) is required as a cofactor.

It localises to the cytoplasm. In terms of biological role, one of several proteins that assist in the late maturation steps of the functional core of the 30S ribosomal subunit. Helps release RbfA from mature subunits. May play a role in the assembly of ribosomal proteins into the subunit. Circularly permuted GTPase that catalyzes slow GTP hydrolysis, GTPase activity is stimulated by the 30S ribosomal subunit. The chain is Small ribosomal subunit biogenesis GTPase RsgA from Haemophilus influenzae (strain PittEE).